The primary structure comprises 543 residues: Mannuronan C5-epimerase (543 aa).

The signal sequence occupies residues 1–35; the sequence is MPDISLSIPRRRLPRLRPLAAAVLGAVLLHGQAWA. PbH1 repeat units lie at residues 243 to 270, 283 to 304, 305 to 327, 329 to 352, 354 to 376, 378 to 400, and 401 to 423; these read GAEVYLSNSTFTSFGYNASKAYGISISQ, RPKGWVIDSTIVDSWYGFYCYE, ADDLVVKGNTYRDNIVYGIDPHD, SHRLIIADNTVHGTRKKHGIIVSR, VNDSFIFNNRSYENKLSGIVLDR, SEGNLVAYNEVYRNHSDGITLYE, and SGDNLLWGNQVLANRRHGIRVRN. Residue His326 is the Proton acceptor of the active site.

The protein belongs to the D-mannuronate C5-epimerase family.

The protein resides in the periplasm. The enzyme catalyses [(1-&gt;4)-beta-D-mannuronosyl](n) = [alginate](n). It functions in the pathway glycan biosynthesis; alginate biosynthesis. Inhibited by the presence of acetyl groups on the substrate. In terms of biological role, catalyzes the epimerization of beta-D-mannuronate to alpha-L-guluronate during the synthesis of the linear polysaccharide alginate. In addition, is part of a periplasmic protein complex that protects alginate from degradation by AlgL by channeling the newly formed alginate polymer through a scaffold that transfers the alginate polymer through the periplasmic space to the outer membrane secretin AlgE. The sequence is that of Mannuronan C5-epimerase from Pseudomonas aeruginosa (strain ATCC 15692 / DSM 22644 / CIP 104116 / JCM 14847 / LMG 12228 / 1C / PRS 101 / PAO1).